Consider the following 283-residue polypeptide: Bifunctional protein FolD (283 aa).

Residues 157-159 (GNG) and Ile224 each bind NADP(+).

The protein belongs to the tetrahydrofolate dehydrogenase/cyclohydrolase family. As to quaternary structure, homodimer.

It catalyses the reaction (6R)-5,10-methylene-5,6,7,8-tetrahydrofolate + NADP(+) = (6R)-5,10-methenyltetrahydrofolate + NADPH. The catalysed reaction is (6R)-5,10-methenyltetrahydrofolate + H2O = (6R)-10-formyltetrahydrofolate + H(+). It functions in the pathway one-carbon metabolism; tetrahydrofolate interconversion. Catalyzes the oxidation of 5,10-methylenetetrahydrofolate to 5,10-methenyltetrahydrofolate and then the hydrolysis of 5,10-methenyltetrahydrofolate to 10-formyltetrahydrofolate. The sequence is that of Bifunctional protein FolD from Mycoplasmoides gallisepticum (strain R(low / passage 15 / clone 2)) (Mycoplasma gallisepticum).